A 337-amino-acid polypeptide reads, in one-letter code: Peroxisome biogenesis factor 10 (337 aa).

Residues 1 to 24 are Peroxisomal matrix-facing; it reads MKNDNKLQKEALMRLSQLRFPFAD. The helical transmembrane segment at 25-54 threads the bilayer; sequence APSIVQAHQKDEQIQGLLIMKVTELCKLIK. A topological domain (cytoplasmic) is located at residue Ser55. The helical transmembrane segment at 56 to 77 threads the bilayer; the sequence is QLFVNSYPKELSIFAKLLYLLF. Residues 78-105 lie on the Peroxisomal matrix side of the membrane; that stretch reads TTGRRGRTLGEEYVDLTYTNRKGTRLAG. Residues 106–138 traverse the membrane as a helical segment; sequence RLKMIVFAFAYPLCPYFITKLYKKIMKNNKESK. At 139 to 145 the chain is on the cytoplasmic side; it reads IEDTESV. Residues 146–166 form a helical membrane-spanning segment; the sequence is AAFCKGLLDFILDVHMTLFYF. Residues 167-202 are Peroxisomal matrix-facing; sequence KGAFYSISKRIFGMRYVFKHILSKNEANFREEGSQK. The chain crosses the membrane as a helical span at residues 203–222; that stretch reads YKVLGYILLAQNVMKWYPVL. Residues 223-337 are Cytoplasmic-facing; it reads TSTLGSWIYG…QPQEILVLRQ (115 aa). Zn(2+)-binding residues include Cys286, Cys289, Cys301, His303, Cys306, Cys309, Cys320, and Cys323. The RING-type zinc finger occupies 286–327; that stretch reads CILCLMNMSDPSCAPCGHLFCWSCLMSWCKERPECPLCRQHC.

This sequence belongs to the pex2/pex10/pex12 family. Component of the PEX2-PEX10-PEX12 retrotranslocation channel, composed of PEX2, PEX10 and PEX12.

It localises to the peroxisome membrane. The catalysed reaction is S-ubiquitinyl-[E2 ubiquitin-conjugating enzyme]-L-cysteine + [acceptor protein]-L-lysine = [E2 ubiquitin-conjugating enzyme]-L-cysteine + N(6)-ubiquitinyl-[acceptor protein]-L-lysine.. It functions in the pathway protein modification; protein ubiquitination. The E3 ubiquitin-protein ligase activity is stimulated by PEX12. Its function is as follows. E3 ubiquitin-protein ligase component of a retrotranslocation channel required for peroxisome organization by mediating export of the PEX5 receptor from peroxisomes to the cytosol, thereby promoting PEX5 recycling. The retrotranslocation channel is composed of PEX2, PEX10 and PEX12; each subunit contributing transmembrane segments that coassemble into an open channel that specifically allows the passage of PEX5 through the peroxisomal membrane. PEX10 also regulates PEX5 recycling by acting as a E3 ubiquitin-protein ligase. When PEX5 recycling is compromised, PEX10 catalyzes polyubiquitination of PEX5 during its passage through the retrotranslocation channel, leading to its degradation. This chain is Peroxisome biogenesis factor 10, found in Saccharomyces cerevisiae (strain ATCC 204508 / S288c) (Baker's yeast).